Reading from the N-terminus, the 675-residue chain is L-type lectin-domain containing receptor kinase IX.2 (675 aa).

An N-terminal signal peptide occupies residues 1–35 (MLYFIFCQNLSSSSSMSNSILFLSLFLFLPFVVDS). N-linked (GlcNAc...) asparagine glycans are attached at residues asparagine 9, asparagine 39, asparagine 110, asparagine 146, asparagine 179, asparagine 186, asparagine 191, and asparagine 212. The legume-lectin like stretch occupies residues 36–269 (LYFNFTSFRQ…EEHRLLSWEL (234 aa)). Topologically, residues 36 to 281 (LYFNFTSFRQ…SLDSDKADSR (246 aa)) are extracellular. The chain crosses the membrane as a helical span at residues 282–302 (IGLVIGISASGFVFLTFMVIT). The Cytoplasmic portion of the chain corresponds to 303–675 (TVVVWSRKQR…VTFSGIEYGR (373 aa)). A Protein kinase domain is found at 350 to 631 (FSSHRKLGEG…KQGIQVMNFE (282 aa)). Residues 356-364 (LGEGGFGAV) and lysine 379 contribute to the ATP site. The Proton acceptor role is filled by aspartate 475.

In the C-terminal section; belongs to the protein kinase superfamily. Ser/Thr protein kinase family. It in the N-terminal section; belongs to the leguminous lectin family. In terms of assembly, interacts with ABCG40.

It is found in the cell membrane. The enzyme catalyses L-seryl-[protein] + ATP = O-phospho-L-seryl-[protein] + ADP + H(+). It carries out the reaction L-threonyl-[protein] + ATP = O-phospho-L-threonyl-[protein] + ADP + H(+). Promotes hydrogen peroxide H(2)O(2) production and cell death. Functionally, involved in resistance response to the pathogenic oomycetes Phytophthora infestans and Phytophthora capsici. This is L-type lectin-domain containing receptor kinase IX.2 from Arabidopsis thaliana (Mouse-ear cress).